The chain runs to 434 residues: MSFNTIIDWNSCTAEQQRQLLMRPAISASESITRTVNDILDNVKTRGDEALREYSAKFDKTTVTALKVSADEIAAASERLSDELKQAMAVAVKNIETFHTAQKLPPVDVETQPGVRCQQVTRPVASVGLYIPGGSAPLFSTVLMLATPARIAGCKKVVLCSPPPIADEILYAAQLCGVQDVFNVGGAQAIAALAFGTESVPKVDKIFGPGNAFVTEAKRQVSQRLDGAAIDMPAGPSEVLVIADSGATPDFVASDLLSQAEHGPDSQVILLTPDADMARRVAEAVERQLAELPRAETARQALNASRLIVTKDLAQCVEISNQYGPEHLIIQTRNARELVDGITSAGSVFLGDWSPESAGDYASGTNHVLPTYGYTATCSSLGLADFQKRMTVQELSKEGFSTLASTIETLAAAERLTAHKNAVTLRVNALKEQA.

Residues Tyr-130, Gln-188, and Asn-211 each contribute to the NAD(+) site. 3 residues coordinate substrate: Ser-237, Gln-259, and His-262. Zn(2+) contacts are provided by Gln-259 and His-262. Active-site proton acceptor residues include Glu-326 and His-327. Substrate is bound by residues His-327, Asp-360, Glu-414, and His-419. Zn(2+) is bound at residue Asp-360. Residue His-419 coordinates Zn(2+).

This sequence belongs to the histidinol dehydrogenase family. Homodimer. Requires Zn(2+) as cofactor.

It carries out the reaction L-histidinol + 2 NAD(+) + H2O = L-histidine + 2 NADH + 3 H(+). The protein operates within amino-acid biosynthesis; L-histidine biosynthesis; L-histidine from 5-phospho-alpha-D-ribose 1-diphosphate: step 9/9. Its function is as follows. Catalyzes the sequential NAD-dependent oxidations of L-histidinol to L-histidinaldehyde and then to L-histidine. The sequence is that of Histidinol dehydrogenase from Escherichia coli O6:H1 (strain CFT073 / ATCC 700928 / UPEC).